The sequence spans 114 residues: UPF0102 protein HPSH_02690 (114 aa).

This sequence belongs to the UPF0102 family.

The sequence is that of UPF0102 protein HPSH_02690 from Helicobacter pylori (strain Shi470).